Reading from the N-terminus, the 753-residue chain is 5-methyltetrahydropteroyltriglutamate--homocysteine methyltransferase (753 aa).

5-methyltetrahydropteroyltri-L-glutamate contacts are provided by residues 17–20 (RELK) and Lys117. L-homocysteine-binding positions include 431 to 433 (IGS) and Glu484. L-methionine is bound by residues 431-433 (IGS) and Glu484. Residues 515-516 (RC) and Trp561 each bind 5-methyltetrahydropteroyltri-L-glutamate. Asp599 serves as a coordination point for L-homocysteine. Asp599 contacts L-methionine. Glu605 is a binding site for 5-methyltetrahydropteroyltri-L-glutamate. The Zn(2+) site is built by His641, Cys643, and Glu665. His694 acts as the Proton donor in catalysis. Cys726 provides a ligand contact to Zn(2+).

Belongs to the vitamin-B12 independent methionine synthase family. Zn(2+) serves as cofactor.

The catalysed reaction is 5-methyltetrahydropteroyltri-L-glutamate + L-homocysteine = tetrahydropteroyltri-L-glutamate + L-methionine. Its pathway is amino-acid biosynthesis; L-methionine biosynthesis via de novo pathway; L-methionine from L-homocysteine (MetE route): step 1/1. Functionally, catalyzes the transfer of a methyl group from 5-methyltetrahydrofolate to homocysteine resulting in methionine formation. This is 5-methyltetrahydropteroyltriglutamate--homocysteine methyltransferase from Escherichia coli O6:H1 (strain CFT073 / ATCC 700928 / UPEC).